Consider the following 131-residue polypeptide: Sec-independent protein translocase protein TatB (131 aa).

A helical transmembrane segment spans residues 2–22; the sequence is FDGIGFMELLLIGIVGLVVLG. Residues 86 to 95 are compositionally biased toward polar residues; that stretch reads LKEAAQSVNR. Residues 86-131 are disordered; the sequence is LKEAAQSVNRPYQVEDVPAAKDVPAKEMPTSETSTATNANSDKPNG. Residues 115-131 are compositionally biased toward low complexity; that stretch reads TSETSTATNANSDKPNG.

Belongs to the TatB family. As to quaternary structure, the Tat system comprises two distinct complexes: a TatABC complex, containing multiple copies of TatA, TatB and TatC subunits, and a separate TatA complex, containing only TatA subunits. Substrates initially bind to the TatABC complex, which probably triggers association of the separate TatA complex to form the active translocon.

It localises to the cell inner membrane. Functionally, part of the twin-arginine translocation (Tat) system that transports large folded proteins containing a characteristic twin-arginine motif in their signal peptide across membranes. Together with TatC, TatB is part of a receptor directly interacting with Tat signal peptides. TatB may form an oligomeric binding site that transiently accommodates folded Tat precursor proteins before their translocation. This Shewanella halifaxensis (strain HAW-EB4) protein is Sec-independent protein translocase protein TatB.